Here is a 141-residue protein sequence, read N- to C-terminus: ATP synthase epsilon chain (141 aa).

This sequence belongs to the ATPase epsilon chain family. In terms of assembly, F-type ATPases have 2 components, CF(1) - the catalytic core - and CF(0) - the membrane proton channel. CF(1) has five subunits: alpha(3), beta(3), gamma(1), delta(1), epsilon(1). CF(0) has three main subunits: a, b and c.

It is found in the cell inner membrane. Functionally, produces ATP from ADP in the presence of a proton gradient across the membrane. This chain is ATP synthase epsilon chain, found in Teredinibacter turnerae (strain ATCC 39867 / T7901).